A 150-amino-acid chain; its full sequence is Cytochrome c oxidase subunit 5A, mitochondrial (150 aa).

Residues 1-41 constitute a mitochondrion transit peptide; that stretch reads MLGAALRRCAVAATTRAGPRGLLHSARTPGPAAAIQSVRCY. Residues 2 to 17 carry the SIFI-degron motif; the sequence is LGAALRRCAVAATTRA. Residues K87 and K113 each carry the N6-acetyllysine modification. T141 is subject to Phosphothreonine.

It belongs to the cytochrome c oxidase subunit 5A family. As to quaternary structure, component of the cytochrome c oxidase (complex IV, CIV), a multisubunit enzyme composed of 14 subunits. The complex is composed of a catalytic core of 3 subunits MT-CO1, MT-CO2 and MT-CO3, encoded in the mitochondrial DNA, and 11 supernumerary subunits COX4I, COX5A, COX5B, COX6A, COX6B, COX6C, COX7A, COX7B, COX7C, COX8 and NDUFA4, which are encoded in the nuclear genome. The complex exists as a monomer or a dimer and forms supercomplexes (SCs) in the inner mitochondrial membrane with NADH-ubiquinone oxidoreductase (complex I, CI) and ubiquinol-cytochrome c oxidoreductase (cytochrome b-c1 complex, complex III, CIII), resulting in different assemblies (supercomplex SCI(1)III(2)IV(1) and megacomplex MCI(2)III(2)IV(2)). Interacts with AFG1L. Interacts with RAB5IF. In response to mitochondrial stress, the precursor protein is ubiquitinated by the SIFI complex in the cytoplasm before mitochondrial import, leading to its degradation. Within the SIFI complex, UBR4 initiates ubiquitin chain that are further elongated or branched by KCMF1.

The protein localises to the mitochondrion inner membrane. It functions in the pathway energy metabolism; oxidative phosphorylation. Functionally, component of the cytochrome c oxidase, the last enzyme in the mitochondrial electron transport chain which drives oxidative phosphorylation. The respiratory chain contains 3 multisubunit complexes succinate dehydrogenase (complex II, CII), ubiquinol-cytochrome c oxidoreductase (cytochrome b-c1 complex, complex III, CIII) and cytochrome c oxidase (complex IV, CIV), that cooperate to transfer electrons derived from NADH and succinate to molecular oxygen, creating an electrochemical gradient over the inner membrane that drives transmembrane transport and the ATP synthase. Cytochrome c oxidase is the component of the respiratory chain that catalyzes the reduction of oxygen to water. Electrons originating from reduced cytochrome c in the intermembrane space (IMS) are transferred via the dinuclear copper A center (CU(A)) of subunit 2 and heme A of subunit 1 to the active site in subunit 1, a binuclear center (BNC) formed by heme A3 and copper B (CU(B)). The BNC reduces molecular oxygen to 2 water molecules using 4 electrons from cytochrome c in the IMS and 4 protons from the mitochondrial matrix. The chain is Cytochrome c oxidase subunit 5A, mitochondrial (COX5A) from Pan troglodytes (Chimpanzee).